Reading from the N-terminus, the 289-residue chain is Eukaryotic translation initiation factor 3 subunit G (289 aa).

The disordered stretch occupies residues 1 to 33 (MSRPTKADWADDEEFDDPSALPPQQITTNKDGT). One can recognise an RRM domain in the interval 209–287 (ATLRVTNVSE…LILRVEFAKR (79 aa)).

It belongs to the eIF-3 subunit G family. In terms of assembly, component of the eukaryotic translation initiation factor 3 (eIF-3) complex.

The protein localises to the cytoplasm. Its function is as follows. RNA-binding component of the eukaryotic translation initiation factor 3 (eIF-3) complex, which is involved in protein synthesis of a specialized repertoire of mRNAs and, together with other initiation factors, stimulates binding of mRNA and methionyl-tRNAi to the 40S ribosome. The eIF-3 complex specifically targets and initiates translation of a subset of mRNAs involved in cell proliferation. This subunit can bind 18S rRNA. The sequence is that of Eukaryotic translation initiation factor 3 subunit G (tif35) from Emericella nidulans (strain FGSC A4 / ATCC 38163 / CBS 112.46 / NRRL 194 / M139) (Aspergillus nidulans).